A 617-amino-acid polypeptide reads, in one-letter code: Protein fem-1 homolog C (617 aa).

At M1 the chain carries N-acetylmethionine. 7 ANK repeats span residues 2–31 (DLKT…KEEV), 40–70 (NGAT…SIEV), 82–111 (EGAP…SVNN), 115–144 (TNST…DLEV), 148–177 (HGHT…DVNR), 181–210 (KGNT…KMEK), and 213–242 (YGMT…TSKT). 2 TPR repeats span residues 245-279 (INAL…RYSD) and 338-371 (SYYI…QQNN). ANK repeat units follow at residues 481–523 (NNFS…DVNV) and 527–556 (DDNS…HFDA).

It belongs to the fem-1 family. In terms of assembly, component of a CRL2 E3 ubiquitin-protein ligase complex, also named ECS (Elongin BC-CUL2/5-SOCS-box protein) complex, composed of CUL2, Elongin BC (ELOB and ELOC), RBX1 and substrate-specific adapter FEM1C.

It participates in protein modification; protein ubiquitination. In terms of biological role, substrate-recognition component of a Cul2-RING (CRL2) E3 ubiquitin-protein ligase complex of the DesCEND (destruction via C-end degrons) pathway, which recognizes a C-degron located at the extreme C terminus of target proteins, leading to their ubiquitination and degradation. The C-degron recognized by the DesCEND pathway is usually a motif of less than ten residues and can be present in full-length proteins, truncated proteins or proteolytically cleaved forms. The CRL2(FEM1C) complex specifically recognizes proteins with an arginine at the C-terminus: recognizes and binds proteins ending with -Lys/Arg-Xaa-Arg and -Lys/Arg-Xaa-Xaa-Arg C-degrons, such as SIL1 or OR51B2, leading to their ubiquitination and degradation. The CRL2(FEM1C) complex mediates ubiquitination and degradation of truncated MSRB1/SEPX1 selenoproteins produced by failed UGA/Sec decoding. The protein is Protein fem-1 homolog C of Bos taurus (Bovine).